Here is a 101-residue protein sequence, read N- to C-terminus: Small ribosomal subunit protein uS14 (101 aa).

The protein belongs to the universal ribosomal protein uS14 family. Part of the 30S ribosomal subunit. Contacts proteins S3 and S10.

Functionally, binds 16S rRNA, required for the assembly of 30S particles and may also be responsible for determining the conformation of the 16S rRNA at the A site. In Cereibacter sphaeroides (strain ATCC 17029 / ATH 2.4.9) (Rhodobacter sphaeroides), this protein is Small ribosomal subunit protein uS14.